Consider the following 357-residue polypeptide: UDP-N-acetylglucosamine--N-acetylmuramyl-(pentapeptide) pyrophosphoryl-undecaprenol N-acetylglucosamine transferase (357 aa).

Residues Arg166, Ser196, and Gln290 each contribute to the UDP-N-acetyl-alpha-D-glucosamine site.

It belongs to the glycosyltransferase 28 family. MurG subfamily.

The protein localises to the cell membrane. It carries out the reaction Mur2Ac(oyl-L-Ala-gamma-D-Glu-L-Lys-D-Ala-D-Ala)-di-trans,octa-cis-undecaprenyl diphosphate + UDP-N-acetyl-alpha-D-glucosamine = beta-D-GlcNAc-(1-&gt;4)-Mur2Ac(oyl-L-Ala-gamma-D-Glu-L-Lys-D-Ala-D-Ala)-di-trans,octa-cis-undecaprenyl diphosphate + UDP + H(+). It functions in the pathway cell wall biogenesis; peptidoglycan biosynthesis. Cell wall formation. Catalyzes the transfer of a GlcNAc subunit on undecaprenyl-pyrophosphoryl-MurNAc-pentapeptide (lipid intermediate I) to form undecaprenyl-pyrophosphoryl-MurNAc-(pentapeptide)GlcNAc (lipid intermediate II). The polypeptide is UDP-N-acetylglucosamine--N-acetylmuramyl-(pentapeptide) pyrophosphoryl-undecaprenol N-acetylglucosamine transferase (Staphylococcus epidermidis (strain ATCC 35984 / DSM 28319 / BCRC 17069 / CCUG 31568 / BM 3577 / RP62A)).